The primary structure comprises 765 residues: Cullin-5 (765 aa).

Residues 696–757 (RELRVQEGIV…NKYMERRADD (62 aa)) enclose the Cullin neddylation domain. Lys709 participates in a covalent cross-link: Glycyl lysine isopeptide (Lys-Gly) (interchain with G-Cter in NEDD8).

The protein belongs to the cullin family. Interacts with rbx-1 and rbx-2. Post-translationally, neddylated; which enhances the ubiquitination activity of SCF-like complex.

Its pathway is protein modification; protein ubiquitination. In terms of biological role, probable core component of cullin-based SCF-like E3 ubiquitin-protein ligase complexes which mediate the ubiquitination and subsequent proteasomal degradation of target proteins. In association with rbx-2 seems to be involved in meiotic cell cycle progression in the germline. Required for phosphorylation of the MAP kinase MPK-1 in the germline. The chain is Cullin-5 (cul-5) from Caenorhabditis elegans.